The sequence spans 951 residues: WD repeat-containing and planar cell polarity effector protein fritz (951 aa).

WD repeat units lie at residues 304-343 (PMGA…TKYA) and 345-384 (QIEI…IGHQ). Polar residues-rich tracts occupy residues 709–720 (TLKSNSSLQQAP), 757–771 (IPDQ…STMP), and 818–828 (SILSNPANPAP). 3 disordered regions span residues 709-776 (TLKS…SPPP), 816-883 (TASI…AARH), and 903-951 (EYLK…FGVV). A compositionally biased stretch (low complexity) spans 930 to 942 (SSKGGNSSSSSSS).

It belongs to the WD repeat fritz family.

The protein localises to the cell membrane. It localises to the cytoplasm. The protein resides in the cytoskeleton. It is found in the cilium axoneme. Functionally, probable effector of the planar cell polarity signaling pathway which regulates the septin cytoskeleton in both ciliogenesis and collective cell movements. Functions cell autonomously to regulate wing cell hair polarity and number. In Drosophila melanogaster (Fruit fly), this protein is WD repeat-containing and planar cell polarity effector protein fritz (frtz).